The following is a 244-amino-acid chain: Proteasome subunit alpha type-5 (244 aa).

It belongs to the peptidase T1A family. The 26S proteasome consists of a 20S proteasome core and two 19S regulatory subunits. The 20S proteasome core is composed of 28 subunits that are arranged in four stacked rings, resulting in a barrel-shaped structure. The two end rings are each formed by seven alpha subunits, and the two central rings are each formed by seven beta subunits. The catalytic chamber with the active sites is on the inside of the barrel.

It localises to the cytoplasm. Its subcellular location is the nucleus. Functionally, the proteasome is a multicatalytic proteinase complex which is characterized by its ability to cleave peptides with Arg, Phe, Tyr, Leu, and Glu adjacent to the leaving group at neutral or slightly basic pH. The proteasome has an ATP-dependent proteolytic activity. The chain is Proteasome subunit alpha type-5 (Prosalpha5) from Drosophila melanogaster (Fruit fly).